Here is a 215-residue protein sequence, read N- to C-terminus: Peptide methionine sulfoxide reductase MsrA (215 aa).

The active site involves Cys58.

This sequence belongs to the MsrA Met sulfoxide reductase family.

It carries out the reaction L-methionyl-[protein] + [thioredoxin]-disulfide + H2O = L-methionyl-(S)-S-oxide-[protein] + [thioredoxin]-dithiol. The catalysed reaction is [thioredoxin]-disulfide + L-methionine + H2O = L-methionine (S)-S-oxide + [thioredoxin]-dithiol. Its function is as follows. Has an important function as a repair enzyme for proteins that have been inactivated by oxidation. Catalyzes the reversible oxidation-reduction of methionine sulfoxide in proteins to methionine. This chain is Peptide methionine sulfoxide reductase MsrA, found in Pseudomonas syringae pv. tomato (strain ATCC BAA-871 / DC3000).